Reading from the N-terminus, the 360-residue chain is Phospho-N-acetylmuramoyl-pentapeptide-transferase (360 aa).

The next 10 helical transmembrane spans lie at 26-46 (TILGVLTALGIALMIGPAVIQ), 73-93 (TMGGALILVAIAVSTLLWADL), 98-118 (VWVVLLVTLAFGLIGGVDDAL), 136-156 (LQVLAALAASTFLFATATDPV), 168-188 (WVFPLGLGFIALATLVIVGSS), 199-219 (GLAIMPTVLVATGLAVFAYAS), 235-255 (GVGELVIFCGAIVGAGLGFLW), 263-283 (VFMGDVGALALGAALGVVAVA), 288-308 (IVLFIMGGIFVMETVSVMIQV), and 338-358 (VIVRFWIITVVLVLIGLAMLK).

Belongs to the glycosyltransferase 4 family. MraY subfamily. The cofactor is Mg(2+).

Its subcellular location is the cell inner membrane. The enzyme catalyses UDP-N-acetyl-alpha-D-muramoyl-L-alanyl-gamma-D-glutamyl-meso-2,6-diaminopimeloyl-D-alanyl-D-alanine + di-trans,octa-cis-undecaprenyl phosphate = di-trans,octa-cis-undecaprenyl diphospho-N-acetyl-alpha-D-muramoyl-L-alanyl-D-glutamyl-meso-2,6-diaminopimeloyl-D-alanyl-D-alanine + UMP. The protein operates within cell wall biogenesis; peptidoglycan biosynthesis. In terms of biological role, catalyzes the initial step of the lipid cycle reactions in the biosynthesis of the cell wall peptidoglycan: transfers peptidoglycan precursor phospho-MurNAc-pentapeptide from UDP-MurNAc-pentapeptide onto the lipid carrier undecaprenyl phosphate, yielding undecaprenyl-pyrophosphoryl-MurNAc-pentapeptide, known as lipid I. In Halorhodospira halophila (strain DSM 244 / SL1) (Ectothiorhodospira halophila (strain DSM 244 / SL1)), this protein is Phospho-N-acetylmuramoyl-pentapeptide-transferase.